Here is a 1203-residue protein sequence, read N- to C-terminus: Nitric oxide synthase 3 (1203 aa).

The disordered stretch occupies residues 1–71 (MGNLKSVAQE…PPEGPKFPRV (71 aa)). A lipid anchor (N-myristoyl glycine) is attached at Gly-2. 2 S-palmitoyl cysteine lipidation sites follow: Cys-15 and Cys-26. The segment covering 15 to 27 (CGLGLGLGLGLCG) has biased composition (gly residues). At Thr-33 the chain carries Phosphothreonine. Over residues 33 to 66 (TPAPEPSRAPASLLPPAPEHSPPSSPLTQPPEGP) the composition is skewed to pro residues. Zn(2+)-binding residues include Cys-94 and Cys-99. The segment at 98 to 486 (RCLGSLVFPR…PDPWKGSAAK (389 aa)) is interaction with NOSIP. Position 102 (Ser-102) interacts with (6R)-L-erythro-5,6,7,8-tetrahydrobiopterin. Position 114 is a phosphoserine; by CDK5 (Ser-114). Cys-184 contributes to the heme b binding site. The L-arginine site is built by Gln-247, Trp-356, Tyr-357, and Glu-361. Residue Arg-365 participates in (6R)-L-erythro-5,6,7,8-tetrahydrobiopterin binding. Position 366 (Asn-366) interacts with L-arginine. (6R)-L-erythro-5,6,7,8-tetrahydrobiopterin contacts are provided by Ala-446, Trp-447, and Phe-460. Residue Tyr-475 participates in heme b binding. Residues 491–510 (TRKKTFKEVANAVKISASLM) form a calmodulin-binding region. The residue at position 495 (Thr-495) is a Phosphothreonine; by AMPK. One can recognise a Flavodoxin-like domain in the interval 520-703 (ATILYGSETG…AFRGWAQAAF (184 aa)). Residues Ser-526, Glu-527, Thr-528, Arg-530, Ser-572, and Thr-573 each coordinate FMN. Phosphoserine occurs at positions 615, 633, and 638. The FMN site is built by Ser-654, Cys-661, Glu-687, and Gln-691. The 247-residue stretch at 756–1002 (RKMFQATIRS…IRGAPSFRLP (247 aa)) folds into the FAD-binding FR-type domain. Residue Arg-776 coordinates NADP(+). Residue His-798 participates in FAD binding. Residue Ser-836 is modified to Phosphoserine. 9 residues coordinate FAD: Arg-938, Tyr-940, Ser-941, Thr-956, Ala-958, Tyr-962, Val-975, Cys-976, and Ser-977. NADP(+) is bound by residues Thr-1016, Arg-1049, Ser-1078, Arg-1079, Lys-1085, Tyr-1087, and Gln-1089. Position 1175 is a phosphothreonine (Thr-1175). Ser-1177 is subject to Phosphoserine; by AMPK. The residue at position 1179 (Ser-1179) is a Phosphoserine.

It belongs to the NOS family. Homodimer. Interacts with NOSIP and NOSTRIN. Interacts with HSP90AB1. Forms a complex with ASL, ASS1 and SLC7A1; the complex regulates cell-autonomous L-arginine synthesis and citrulline recycling while channeling extracellular L-arginine to nitric oxide synthesis pathway. Heme b serves as cofactor. Requires FAD as cofactor. FMN is required as a cofactor. It depends on (6R)-L-erythro-5,6,7,8-tetrahydrobiopterin as a cofactor. Post-translationally, phosphorylation by AMPK at Ser-1177 in the presence of Ca(2+)-calmodulin (CaM) activates activity. In absence of Ca(2+)-calmodulin, AMPK also phosphorylates Thr-495, resulting in inhibition of activity. Phosphorylation of Ser-114 by CDK5 reduces activity. Platelets, placenta, liver and kidney.

It localises to the cell membrane. The protein resides in the membrane. It is found in the caveola. The protein localises to the cytoplasm. Its subcellular location is the cytoskeleton. It localises to the golgi apparatus. It carries out the reaction 2 L-arginine + 3 NADPH + 4 O2 + H(+) = 2 L-citrulline + 2 nitric oxide + 3 NADP(+) + 4 H2O. With respect to regulation, stimulated by calcium/calmodulin. Inhibited by NOSIP and NOSTRIN. In terms of biological role, produces nitric oxide (NO) which is implicated in vascular smooth muscle relaxation through a cGMP-mediated signal transduction pathway. NO mediates vascular endothelial growth factor (VEGF)-induced angiogenesis in coronary vessels and promotes blood clotting through the activation of platelets. Its function is as follows. Lacks eNOS activity, dominant-negative form that may down-regulate eNOS activity by forming heterodimers with isoform 1. This Homo sapiens (Human) protein is Nitric oxide synthase 3.